The chain runs to 443 residues: MSSLTNPNIFTVSRLNSEVRLLLENQLGIVWLVGEISNFSAPVSGHWYFTLKDSMAQVKCAMFRGNNRLVSFKPTNGNQVLVKARLSLYEPRGDYQLIIESMQPEGDGRLQQQFDALKMKLASEGLFAQSSKQAIPEHPKCVGIITSKTGAALYDILDVLKRRDPSLPVVIYPTLVQGEEAAIQIAQAIGRANSRNECDVLIVGRGGGSLEDLWCFNNEIVARTIAASQIPIISAVGHEIDVTIADFVADLRAPTPSAAAELVSRDNSHKDQALMSREQKLRAAWRHYLTEQNRTIVSLSHRLEKQHPRYRLMRQTQQADELQIRLQRAMEKYLAQREQKVSRVQHKLQLLSPVRQISEQKNALARVEQKMMDAMDRKLLRLRHQIAIAAEKLDTVSPLATLKRGYSITQSESGDVITRQSQIKTGDTLVTRLSDGEIRSTVN.

The protein belongs to the XseA family. As to quaternary structure, heterooligomer composed of large and small subunits.

The protein resides in the cytoplasm. It catalyses the reaction Exonucleolytic cleavage in either 5'- to 3'- or 3'- to 5'-direction to yield nucleoside 5'-phosphates.. Functionally, bidirectionally degrades single-stranded DNA into large acid-insoluble oligonucleotides, which are then degraded further into small acid-soluble oligonucleotides. The chain is Exodeoxyribonuclease 7 large subunit from Vibrio vulnificus (strain CMCP6).